The sequence spans 434 residues: 3-phosphoshikimate 1-carboxyvinyltransferase (434 aa).

3-phosphoshikimate contacts are provided by Lys-22, Ser-23, and Arg-27. Lys-22 lines the phosphoenolpyruvate pocket. Gly-93 and Arg-121 together coordinate phosphoenolpyruvate. Residues Ser-168, Ser-169, Gln-170, Ser-199, Asp-320, and Lys-347 each contribute to the 3-phosphoshikimate site. Gln-170 contributes to the phosphoenolpyruvate binding site. The active-site Proton acceptor is Asp-320. Phosphoenolpyruvate contacts are provided by Arg-351, Arg-394, and Lys-419.

Belongs to the EPSP synthase family. In terms of assembly, monomer.

It localises to the cytoplasm. It carries out the reaction 3-phosphoshikimate + phosphoenolpyruvate = 5-O-(1-carboxyvinyl)-3-phosphoshikimate + phosphate. It participates in metabolic intermediate biosynthesis; chorismate biosynthesis; chorismate from D-erythrose 4-phosphate and phosphoenolpyruvate: step 6/7. In terms of biological role, catalyzes the transfer of the enolpyruvyl moiety of phosphoenolpyruvate (PEP) to the 5-hydroxyl of shikimate-3-phosphate (S3P) to produce enolpyruvyl shikimate-3-phosphate and inorganic phosphate. This chain is 3-phosphoshikimate 1-carboxyvinyltransferase, found in Burkholderia orbicola (strain AU 1054).